The chain runs to 415 residues: MLLPSNLTTSTLMTSSSESYDADNPGLPPEPILSDYVEMFTLVLNFIVGAPLNLAAYTQLSERPTSTRLDLLKRSLNYSDLLVLFIYVPSRACWLLTYDWRGGDALCKIVKMFHTFAFQSSSNVIVCIAVDRLLSVLSPSHHSPNKALKRTKMMLIVAWIVALVISCPQLFIWKAYLALPEYNWSQCLQIWEIARMEKFNKPQVVPEFDAEFWYSILHISLVFWIPCIIIMLSYIIVISWVWINSRPSIRHTSSFSFHTGCDTVDTVLTRASEWNPLKTFSRHVNIKEPEKPMTTPRIVVSDETEVPLTQRPSISPSEASAVMRTGVHTSTSYNANLNRSRALRVSLLLVVAYIICWLPYNLISLIQFLDRDFFSSYLKHVHFCQQLIIFNSVVNPWLYGFFGPRRPSTTGAGRH.

The span at 1–19 (MLLPSNLTTSTLMTSSSES) shows a compositional bias: low complexity. The interval 1–25 (MLLPSNLTTSTLMTSSSESYDADNP) is disordered. Residues 1-35 (MLLPSNLTTSTLMTSSSESYDADNPGLPPEPILSD) lie on the Extracellular side of the membrane. Residues 36-56 (YVEMFTLVLNFIVGAPLNLAA) traverse the membrane as a helical segment. The Cytoplasmic segment spans residues 57–75 (YTQLSERPTSTRLDLLKRS). The chain crosses the membrane as a helical span at residues 76–96 (LNYSDLLVLFIYVPSRACWLL). At 97–108 (TYDWRGGDALCK) the chain is on the extracellular side. The cysteines at positions 107 and 187 are disulfide-linked. A helical membrane pass occupies residues 109–129 (IVKMFHTFAFQSSSNVIVCIA). Residues 130-152 (VDRLLSVLSPSHHSPNKALKRTK) are Cytoplasmic-facing. A helical transmembrane segment spans residues 153–173 (MMLIVAWIVALVISCPQLFIW). Topologically, residues 174–222 (KAYLALPEYNWSQCLQIWEIARMEKFNKPQVVPEFDAEFWYSILHISLV) are extracellular. A helical transmembrane segment spans residues 223 to 243 (FWIPCIIIMLSYIIVISWVWI). Residues 244–345 (NSRPSIRHTS…NLNRSRALRV (102 aa)) are Cytoplasmic-facing. Residues 346-366 (SLLLVVAYIICWLPYNLISLI) form a helical membrane-spanning segment. Residues 367-382 (QFLDRDFFSSYLKHVH) lie on the Extracellular side of the membrane. Residues 383-403 (FCQQLIIFNSVVNPWLYGFFG) form a helical membrane-spanning segment. The Cytoplasmic segment spans residues 404–415 (PRRPSTTGAGRH).

The protein belongs to the G-protein coupled receptor 1 family. As to quaternary structure, heterodimer; with daf-37. As to expression, expressed in the ASI and ASK chemosensory neurons and in the IL-2 interneurons, but weakly expressed in other head neurons in hermaphrodites.

The protein localises to the cell membrane. Functionally, G-protein coupled receptor (GPCR) that forms a heterodimer with daf-37 to control dauer formation and behavior. Required for the response to dauer inducing pheromones such as the ascarosides ascr#2, ascr#3 and ascr#5. The polypeptide is G-protein coupled receptor daf-38 (Caenorhabditis elegans).